The primary structure comprises 359 residues: Probable ribonucleotide transport ATP-binding protein mkl (359 aa).

The 237-residue stretch at 28-264 folds into the ABC transporter domain; the sequence is IEVNGLTKSF…DEPVVRQFLN (237 aa). ATP is bound at residue 60-67; that stretch reads GPSGTGKS.

This sequence belongs to the ABC transporter superfamily.

Not known, could be involved in the transport of ribonucleotides. The polypeptide is Probable ribonucleotide transport ATP-binding protein mkl (mkl) (Mycobacterium bovis (strain ATCC BAA-935 / AF2122/97)).